The following is a 264-amino-acid chain: Myozenin-2 (264 aa).

Arg53 is modified (omega-N-methylarginine). The disordered stretch occupies residues 90-135 (GKVDGSNLEGGSQQAPLTPPNTPDPRSPPNPDNIAPGYSGPLKEIP). Residue Ser101 is modified to Phosphoserine. The span at 106-120 (LTPPNTPDPRSPPNP) shows a compositional bias: pro residues. Residues Thr107 and Thr111 each carry the phosphothreonine modification. Ser116 bears the Phosphoserine mark.

It belongs to the myozenin family. Interacts via its C-terminus with spectrin repeats 3 and 4 of ACTN2. Interacts with ACTN1, LDB3, MYOT and PPP3CA.

Its subcellular location is the cytoplasm. The protein resides in the myofibril. The protein localises to the sarcomere. It localises to the z line. In terms of biological role, myozenins may serve as intracellular binding proteins involved in linking Z line proteins such as alpha-actinin, gamma-filamin, TCAP/telethonin, LDB3/ZASP and localizing calcineurin signaling to the sarcomere. Plays an important role in the modulation of calcineurin signaling. May play a role in myofibrillogenesis. This chain is Myozenin-2 (MYOZ2), found in Pongo abelii (Sumatran orangutan).